The primary structure comprises 100 residues: Aspartyl/glutamyl-tRNA(Asn/Gln) amidotransferase subunit C (100 aa).

Belongs to the GatC family. Heterotrimer of A, B and C subunits.

It carries out the reaction L-glutamyl-tRNA(Gln) + L-glutamine + ATP + H2O = L-glutaminyl-tRNA(Gln) + L-glutamate + ADP + phosphate + H(+). It catalyses the reaction L-aspartyl-tRNA(Asn) + L-glutamine + ATP + H2O = L-asparaginyl-tRNA(Asn) + L-glutamate + ADP + phosphate + 2 H(+). Allows the formation of correctly charged Asn-tRNA(Asn) or Gln-tRNA(Gln) through the transamidation of misacylated Asp-tRNA(Asn) or Glu-tRNA(Gln) in organisms which lack either or both of asparaginyl-tRNA or glutaminyl-tRNA synthetases. The reaction takes place in the presence of glutamine and ATP through an activated phospho-Asp-tRNA(Asn) or phospho-Glu-tRNA(Gln). The sequence is that of Aspartyl/glutamyl-tRNA(Asn/Gln) amidotransferase subunit C from Dictyoglomus turgidum (strain DSM 6724 / Z-1310).